We begin with the raw amino-acid sequence, 101 residues long: MYIVYEYAISTNWIWLYVWLFLFLDSGCQILLRIESEQAFLSLPPIVSFALSVATLIFFYSKRISICYHMLHMYRKWSMVHPQILFAIDSKIPSSLYIYHM.

2 helical membrane passes run 3–23 (IVYE…LFLF) and 39–59 (AFLS…LIFF).

The protein localises to the membrane. This is an uncharacterized protein from Saccharomyces cerevisiae (strain ATCC 204508 / S288c) (Baker's yeast).